The sequence spans 909 residues: E3 ubiquitin-protein ligase HACE1 (909 aa).

The tract at residues 1 to 21 (MERAMEQLNRLTRSLRRARTV) is N-terminal helix important for homodimerization. ANK repeat units lie at residues 23-55 (LPED…NSKF), 64-93 (VKRS…NPNY), 97-126 (SGCT…DVNI), 130-159 (EGLT…DVDV), 163-192 (MGQT…DINR), 196-226 (SGAT…YLPD), and 228-253 (NGVT…QYHP). The interval 398 to 433 (QDQEAPSLSAFEPPGPGSYESLPPGPGDSKPEVLAG) is disordered. The 336-residue stretch at 574–909 (NCAKLKQGIA…HCGSYGYTMA (336 aa)) folds into the HECT domain. Catalysis depends on Cys-876, which acts as the Glycyl thioester intermediate.

In terms of assembly, homodimer. The homodimer is autoinhibited and stabilized by its N-terminal helix. Interacts with RAB1 (RAB1A, RAB1B or RAB1C), RAB4 (RAB4A or RAB4B) and RAB11 (RAB11A or RAB11B); in a GTP-dependent manner. Interacts with the 26S proteasomal complex through the 20S core proteasomal subunit. Interacts with RARB. In terms of processing, autoubiquitinated.

The protein localises to the golgi apparatus. Its subcellular location is the golgi stack membrane. It is found in the cytoplasm. It localises to the endoplasmic reticulum. It catalyses the reaction S-ubiquitinyl-[E2 ubiquitin-conjugating enzyme]-L-cysteine + [acceptor protein]-L-lysine = [E2 ubiquitin-conjugating enzyme]-L-cysteine + N(6)-ubiquitinyl-[acceptor protein]-L-lysine.. Its pathway is protein modification; protein ubiquitination. Sterically autoinhibited in its dimeric state. Functionally, E3 ubiquitin-protein ligase involved in Golgi membrane fusion and regulation of small GTPases. Acts as a regulator of Golgi membrane dynamics during the cell cycle: recruited to Golgi membrane by Rab proteins and regulates postmitotic Golgi membrane fusion. Acts by mediating ubiquitination during mitotic Golgi disassembly, ubiquitination serving as a signal for Golgi reassembly later, after cell division. Specifically binds GTP-bound RAC1, mediating ubiquitination and subsequent degradation of active RAC1, thereby playing a role in host defense against pathogens. May also act as a transcription regulator via its interaction with RARB. The sequence is that of E3 ubiquitin-protein ligase HACE1 (Hace1) from Mus musculus (Mouse).